Reading from the N-terminus, the 409-residue chain is Isovaleryl-CoA dehydrogenase, mitochondrial (409 aa).

The N-terminal 22 residues, 1–22, are a transit peptide targeting the mitochondrion; it reads MQRFFSARSILGYAVKTRRRSF. FAD contacts are provided by residues 151 to 160 and 184 to 186; these read LAMSEPNAGS and WCT. Serine 160 is a binding site for substrate. Substrate-binding positions include 206-207, tyrosine 261, and 268-271; these read SK and DLER. Residue glutamate 270 is the Proton acceptor of the active site. FAD-binding positions include arginine 296, glutamine 307, and 364-368; that span reads QCLGG. 391-392 is a substrate binding site; it reads AG. An FAD-binding site is contributed by 393-395; that stretch reads TSE.

This sequence belongs to the acyl-CoA dehydrogenase family. As to quaternary structure, homodimer. The cofactor is FAD. In terms of tissue distribution, expressed in leaves, stems and flowers. Not detected in roots.

The protein resides in the mitochondrion. The enzyme catalyses 3-methylbutanoyl-CoA + oxidized [electron-transfer flavoprotein] + H(+) = 3-methylbut-2-enoyl-CoA + reduced [electron-transfer flavoprotein]. The protein operates within amino-acid degradation; L-leucine degradation; (S)-3-hydroxy-3-methylglutaryl-CoA from 3-isovaleryl-CoA: step 1/3. In terms of biological role, involved in degradation of the branched-chain amino acids, phytol and lysine for the supply of carbon and electrons to the ETF/ETFQO complex during dark-induced sugar starvation. In Arabidopsis thaliana (Mouse-ear cress), this protein is Isovaleryl-CoA dehydrogenase, mitochondrial (IVD).